The chain runs to 325 residues: Clavaminate synthase 2 (325 aa).

Fe cation contacts are provided by His145, Glu147, and His280. 2-oxoglutarate is bound at residue Arg294.

This sequence belongs to the clavaminate synthase family. The cofactor is Fe(2+).

It catalyses the reaction deoxyamidinoproclavaminate + 2-oxoglutarate + O2 = amidinoproclavaminate + succinate + CO2. The enzyme catalyses proclavaminate + 2-oxoglutarate + O2 = dihydroclavaminate + succinate + CO2 + H2O. The catalysed reaction is dihydroclavaminate + 2-oxoglutarate + O2 = clavaminate + succinate + CO2 + H2O. It participates in antibiotic biosynthesis; clavulanate biosynthesis; clavulanate from D-glyceraldehyde 3-phosphate and L-arginine: step 3/8. The protein operates within antibiotic biosynthesis; clavulanate biosynthesis; clavulanate from D-glyceraldehyde 3-phosphate and L-arginine: step 5/8. It functions in the pathway antibiotic biosynthesis; clavulanate biosynthesis; clavulanate from D-glyceraldehyde 3-phosphate and L-arginine: step 6/8. This Streptomyces clavuligerus protein is Clavaminate synthase 2 (cs2).